Consider the following 968-residue polypeptide: Alanine--tRNA ligase, cytoplasmic (968 aa).

Position 1 is an N-acetylmethionine (Met-1). A phosphoserine mark is found at Ser-3 and Ser-8. Lys-19 carries the N6-acetyllysine modification. ATP contacts are provided by residues Arg-77, His-95, Trp-176, and 214–216 (IWN). 2 residues coordinate L-alanine: Asn-216 and Asp-239. Gly-243 is a binding site for ATP. Phosphoserine is present on residues Ser-399 and Ser-555. Zn(2+) contacts are provided by His-605, His-609, Cys-723, and His-727. Positions 750–763 (RRIVAVTGAEAQKA) match the Nuclear localization signal motif. The residue at position 876 (Lys-876) is an N6-acetyllysine. Lys-943 is subject to N6,N6,N6-trimethyllysine; alternate. Position 943 is an N6,N6-dimethyllysine; alternate (Lys-943). Residue Lys-943 is modified to N6-methyllysine; alternate.

It belongs to the class-II aminoacyl-tRNA synthetase family. In terms of assembly, monomer. Interacts with ANKRD16; the interaction is direct. It depends on Zn(2+) as a cofactor. In terms of processing, ISGylated. Post-translationally, methylation at 'Lys-943' by METTL21C.

The protein localises to the cytoplasm. It is found in the nucleus. It catalyses the reaction tRNA(Ala) + L-alanine + ATP = L-alanyl-tRNA(Ala) + AMP + diphosphate. It carries out the reaction (S)-lactate + ATP + H(+) = (S)-lactoyl-AMP + diphosphate. The catalysed reaction is (S)-lactoyl-AMP + L-lysyl-[protein] = N(6)-[(S)-lactoyl]-L-lysyl-[protein] + AMP + 2 H(+). With respect to regulation, the protein lactyltransferase activity is inhibited by beta-alanine. Catalyzes the attachment of alanine to tRNA(Ala) in a two-step reaction: alanine is first activated by ATP to form Ala-AMP and then transferred to the acceptor end of tRNA(Ala). Also edits incorrectly charged tRNA(Ala) via its editing domain. In presence of high levels of lactate, also acts as a protein lactyltransferase that mediates lactylation of lysine residues in target proteins, such as TEAD1, TP53/p53 and YAP1. Protein lactylation takes place in a two-step reaction: lactate is first activated by ATP to form lactate-AMP and then transferred to lysine residues of target proteins. Acts as an inhibitor of TP53/p53 activity by catalyzing lactylation of TP53/p53. Acts as a positive regulator of the Hippo pathway by mediating lactylation of TEAD1 and YAP1. This chain is Alanine--tRNA ligase, cytoplasmic, found in Homo sapiens (Human).